The following is a 173-amino-acid chain: Photosystem I assembly protein Ycf3 (173 aa).

TPR repeat units lie at residues 35 to 68 (AYVY…EENA), 72 to 105 (GETL…NPKQ), and 120 to 153 (GRTA…NPGG).

It belongs to the Ycf3 family.

Its subcellular location is the cellular thylakoid membrane. Essential for the assembly of the photosystem I (PSI) complex. May act as a chaperone-like factor to guide the assembly of the PSI subunits. In Synechococcus sp. (strain CC9311), this protein is Photosystem I assembly protein Ycf3.